The primary structure comprises 304 residues: KIN17-like protein (304 aa).

A C2H2-type zinc finger spans residues 26-50; that stretch reads WYCSACQKQMRDENGFKCHTQSEGH. Disordered stretches follow at residues 204–228 and 261–291; these read IDLS…SAQN and LNKS…DIIA.

It belongs to the KIN17 family.

The protein localises to the nucleus. Its subcellular location is the nucleolus. The chain is KIN17-like protein from Schizosaccharomyces pombe (strain 972 / ATCC 24843) (Fission yeast).